The chain runs to 260 residues: MAHQAHAYHMVDPSPWPLTGAVAALLLTSGLAMWFHFGSMILLTLGLITMVLTMIQWWRDVIREGTFQGHHTPPVQKGLRYGMILFITSEVFFFIGFFWAFYNSSLAPTYELGECWPPTGITPLNPFEVPLLNTAVLLASGVTVTWAHHSIMHGDRKEAIQSLTLTILLGLYFTALQAMEYYEAPFTIADGVYGSTFFVATGFHGLHVIIGSLFLSVCLLRQIQYHFTSKHHFGFEAAWYWHFVDVVWLFLYVSIYWWGS.

At 1–15 (MAHQAHAYHMVDPSP) the chain is on the mitochondrial matrix side. A helical membrane pass occupies residues 16 to 34 (WPLTGAVAALLLTSGLAMW). Residues 35–40 (FHFGSM) are Mitochondrial intermembrane-facing. The helical transmembrane segment at 41–66 (ILLTLGLITMVLTMIQWWRDVIREGT) threads the bilayer. Residues 67–72 (FQGHHT) are Mitochondrial matrix-facing. Residues 73–105 (PPVQKGLRYGMILFITSEVFFFIGFFWAFYNSS) traverse the membrane as a helical segment. At 106-128 (LAPTYELGECWPPTGITPLNPFE) the chain is on the mitochondrial intermembrane side. Residues 129-152 (VPLLNTAVLLASGVTVTWAHHSIM) traverse the membrane as a helical segment. Over 153 to 155 (HGD) the chain is Mitochondrial matrix. The chain crosses the membrane as a helical span at residues 156–183 (RKEAIQSLTLTILLGLYFTALQAMEYYE). The Mitochondrial intermembrane segment spans residues 184 to 190 (APFTIAD). Residues 191-223 (GVYGSTFFVATGFHGLHVIIGSLFLSVCLLRQI) form a helical membrane-spanning segment. At 224 to 232 (QYHFTSKHH) the chain is on the mitochondrial matrix side. The chain crosses the membrane as a helical span at residues 233-255 (FGFEAAWYWHFVDVVWLFLYVSI). The Mitochondrial intermembrane segment spans residues 256 to 260 (YWWGS).

Belongs to the cytochrome c oxidase subunit 3 family. In terms of assembly, component of the cytochrome c oxidase (complex IV, CIV), a multisubunit enzyme composed of 14 subunits. The complex is composed of a catalytic core of 3 subunits MT-CO1, MT-CO2 and MT-CO3, encoded in the mitochondrial DNA, and 11 supernumerary subunits COX4I, COX5A, COX5B, COX6A, COX6B, COX6C, COX7A, COX7B, COX7C, COX8 and NDUFA4, which are encoded in the nuclear genome. The complex exists as a monomer or a dimer and forms supercomplexes (SCs) in the inner mitochondrial membrane with NADH-ubiquinone oxidoreductase (complex I, CI) and ubiquinol-cytochrome c oxidoreductase (cytochrome b-c1 complex, complex III, CIII), resulting in different assemblies (supercomplex SCI(1)III(2)IV(1) and megacomplex MCI(2)III(2)IV(2)).

The protein localises to the mitochondrion inner membrane. The catalysed reaction is 4 Fe(II)-[cytochrome c] + O2 + 8 H(+)(in) = 4 Fe(III)-[cytochrome c] + 2 H2O + 4 H(+)(out). Its function is as follows. Component of the cytochrome c oxidase, the last enzyme in the mitochondrial electron transport chain which drives oxidative phosphorylation. The respiratory chain contains 3 multisubunit complexes succinate dehydrogenase (complex II, CII), ubiquinol-cytochrome c oxidoreductase (cytochrome b-c1 complex, complex III, CIII) and cytochrome c oxidase (complex IV, CIV), that cooperate to transfer electrons derived from NADH and succinate to molecular oxygen, creating an electrochemical gradient over the inner membrane that drives transmembrane transport and the ATP synthase. Cytochrome c oxidase is the component of the respiratory chain that catalyzes the reduction of oxygen to water. Electrons originating from reduced cytochrome c in the intermembrane space (IMS) are transferred via the dinuclear copper A center (CU(A)) of subunit 2 and heme A of subunit 1 to the active site in subunit 1, a binuclear center (BNC) formed by heme A3 and copper B (CU(B)). The BNC reduces molecular oxygen to 2 water molecules using 4 electrons from cytochrome c in the IMS and 4 protons from the mitochondrial matrix. This Xenopus laevis (African clawed frog) protein is Cytochrome c oxidase subunit 3 (mt-co3).